The primary structure comprises 193 residues: Peptidyl-tRNA hydrolase (193 aa).

Tyr-15 is a tRNA binding site. His-20 functions as the Proton acceptor in the catalytic mechanism. Residues Phe-65, Asn-67, and Asn-113 each contribute to the tRNA site.

It belongs to the PTH family. In terms of assembly, monomer.

It is found in the cytoplasm. It catalyses the reaction an N-acyl-L-alpha-aminoacyl-tRNA + H2O = an N-acyl-L-amino acid + a tRNA + H(+). In terms of biological role, hydrolyzes ribosome-free peptidyl-tRNAs (with 1 or more amino acids incorporated), which drop off the ribosome during protein synthesis, or as a result of ribosome stalling. Catalyzes the release of premature peptidyl moieties from peptidyl-tRNA molecules trapped in stalled 50S ribosomal subunits, and thus maintains levels of free tRNAs and 50S ribosomes. In Ehrlichia ruminantium (strain Welgevonden), this protein is Peptidyl-tRNA hydrolase.